Consider the following 482-residue polypeptide: Thymidine phosphorylase (482 aa).

Positions 1–10 (MAALMTPGTG) are excised as a propeptide. A disordered region spans residues 1 to 36 (MAALMTPGTGAPPAPGDFSGEGSQGLPDPSPEPKQL). A Phosphothreonine modification is found at Thr6. Substrate contacts are provided by His116, Arg202, Ser217, and Lys221. R-V-A-A-A-L-X(5,6)-L-G-R repeat units follow at residues 265–279 (RVAA…PLGR) and 329–342 (RVAA…ALGR). R-A-L-X-X-A-L-V-L repeat units lie at residues 393–401 (RALPLALVL) and 453–461 (RALQEALVL).

It belongs to the thymidine/pyrimidine-nucleoside phosphorylase family. Homodimer.

The enzyme catalyses thymidine + phosphate = 2-deoxy-alpha-D-ribose 1-phosphate + thymine. Its pathway is pyrimidine metabolism; dTMP biosynthesis via salvage pathway; dTMP from thymine: step 1/2. May have a role in maintaining the integrity of the blood vessels. Has growth promoting activity on endothelial cells, angiogenic activity in vivo and chemotactic activity on endothelial cells in vitro. Its function is as follows. Catalyzes the reversible phosphorolysis of thymidine. The produced molecules are then utilized as carbon and energy sources or in the rescue of pyrimidine bases for nucleotide synthesis. In Homo sapiens (Human), this protein is Thymidine phosphorylase.